We begin with the raw amino-acid sequence, 495 residues long: MVSETTKSSPLHFVLFPFMAQGHMIPMVDIARLLAQRGVIITIVTTPHNAARFKNVLNRAIESGLPINLVQVKFPYLEAGLQEGQENIDSLDTMERMIPFFKAVNFLEEPVQKLIEEMNPRPSCLISDFCLPYTSKIAKKFNIPKILFHGMGCFCLLCMHVLRKNREILDNLKSDKELFTVPDFPDRVEFTRTQVPVETYVPAGDWKDIFDGMVEANETSYGVIVNSFQELEPAYAKDYKEVRSGKAWTIGPVSLCNKVGADKAERGNKSDIDQDECLKWLDSKKHGSVLYVCLGSICNLPLSQLKELGLGLEESQRPFIWVIRGWEKYKELVEWFSESGFEDRIQDRGLLIKGWSPQMLILSHPSVGGFLTHCGWNSTLEGITAGLPLLTWPLFADQFCNEKLVVEVLKAGVRSGVEQPMKWGEEEKIGVLVDKEGVKKAVEELMGESDDAKERRRRAKELGDSAHKAVEEGGSSHSNISFLLQDIMELAEPNN.

Residues 146-162 (ILFHGMGCFCLLCMHVL) form a helical membrane-spanning segment. UDP-alpha-D-glucose-binding positions include Ser-296, 356–358 (SPQ), 373–381 (HCGWNSTLE), and 395–398 (FADQ). The interval 446-477 (MGESDDAKERRRRAKELGDSAHKAVEEGGSSH) is disordered. Residues 450-471 (DDAKERRRRAKELGDSAHKAVE) show a composition bias toward basic and acidic residues.

It belongs to the UDP-glycosyltransferase family. In terms of tissue distribution, elongating hypocotyls and root-specific. Expressed in the vascular system, in meristematic tissues of the root tip, and in the vasculature of the hypocotyl right after germination. In late stage of flower development, expressed in petals, and in abscission zones.

Its subcellular location is the membrane. In terms of biological role, specifically catalyzes 23-O-glucosylation of brassinosteroids, resulting probably in their inactivation. Also, involved in the O-glucosylation of trans-zeatin and dihydrozeatin. Active in vitro on cis-zeatin, dihydrozeatin-9-N-Glc, and olomoucine. Also involved in the detoxification of the Fusarium mycotoxin deoxynivalenol by the transfer of glucose from UDP-glucose to the hydroxyl group at C-3. Possesses low quercetin 7-O-glucosyltransferase and 4'-O-glucosyltransferase activities in vitro. The chain is UDP-glycosyltransferase 73C5 (UGT73C5) from Arabidopsis thaliana (Mouse-ear cress).